Reading from the N-terminus, the 357-residue chain is Homoserine kinase (357 aa).

It belongs to the GHMP kinase family. Homoserine kinase subfamily. As to quaternary structure, homodimer.

The enzyme catalyses L-homoserine + ATP = O-phospho-L-homoserine + ADP + H(+). The protein operates within amino-acid biosynthesis; L-threonine biosynthesis; L-threonine from L-aspartate: step 4/5. Functionally, commits homoserine to the threonine biosynthesis pathway by catalyzing its O-phosphorylation. The protein is Homoserine kinase (THR1) of Candida albicans (strain SC5314 / ATCC MYA-2876) (Yeast).